Here is a 130-residue protein sequence, read N- to C-terminus: MSGRGKQGGKTRAKSKTRSSRAGLQFPVGRVHRLLRKGNYAERVGAGAPVYLAAVLEYLTAEILELAWERLPEITKRPVLSPGTCNSLCNDEELNKLLGGVTIAQGGVLPNIQSVLLPKKTESSKSTKSK.

Residues 1–22 are disordered; it reads MSGRGKQGGKTRAKSKTRSSRA. Serine 2 carries the post-translational modification N-acetylserine. Serine 2 bears the Phosphoserine mark. Lysine 6 is modified (N6-(2-hydroxyisobutyryl)lysine). Position 6 is an N6-acetyllysine (lysine 6). Over residues 7–19 the composition is skewed to basic residues; the sequence is QGGKTRAKSKTRS. N6-(2-hydroxyisobutyryl)lysine; alternate is present on lysine 10. An N6-lactoyllysine; alternate modification is found at lysine 10. At lysine 10 the chain carries N6-succinyllysine. Glycyl lysine isopeptide (Lys-Gly) (interchain with G-Cter in ubiquitin) cross-links involve residues lysine 14 and lysine 16. N6-(2-hydroxyisobutyryl)lysine; alternate is present on lysine 37. N6-(2-hydroxyisobutyryl)lysine is present on lysine 76. Lysine 96 carries the post-translational modification N6-(2-hydroxyisobutyryl)lysine; alternate. Position 96 is an N6-succinyllysine (lysine 96). Lysine 96 bears the N6-glutaryllysine; alternate mark. N5-methylglutamine is present on glutamine 105. Lysine 119 bears the N6-(2-hydroxyisobutyryl)lysine; alternate mark. Lysine 119 carries the N6-glutaryllysine; alternate modification. Lysine 120 is covalently cross-linked (Glycyl lysine isopeptide (Lys-Gly) (interchain with G-Cter in ubiquitin)).

It belongs to the histone H2A family. As to quaternary structure, the nucleosome is a histone octamer containing two molecules each of H2A, H2B, H3 and H4 assembled in one H3-H4 heterotetramer and two H2A-H2B heterodimers. The octamer wraps approximately 147 bp of DNA. In terms of processing, monoubiquitination of Lys-120 (H2AK119Ub) gives a specific tag for epigenetic transcriptional repression. Following DNA double-strand breaks (DSBs), it is ubiquitinated through 'Lys-63' linkage of ubiquitin moieties, leading to the recruitment of repair proteins to sites of DNA damage. H2AK119Ub and ionizing radiation-induced 'Lys-63'-linked ubiquitination are distinct events. Phosphorylation on Ser-2 is enhanced during mitosis. Phosphorylation on Ser-2 directly represses transcription. Post-translationally, glutamine methylation at Gln-105 (H2AQ104me) by FBL is specifically dedicated to polymerase I. It is present at 35S ribosomal DNA locus and impairs binding of the FACT complex.

It localises to the nucleus. It is found in the chromosome. Its function is as follows. Core component of nucleosome. Nucleosomes wrap and compact DNA into chromatin, limiting DNA accessibility to the cellular machineries which require DNA as a template. Histones thereby play a central role in transcription regulation, DNA repair, DNA replication and chromosomal stability. DNA accessibility is regulated via a complex set of post-translational modifications of histones, also called histone code, and nucleosome remodeling. This chain is Histone H2A type 2, found in Xenopus laevis (African clawed frog).